The sequence spans 422 residues: Interleukin-11 receptor subunit alpha (422 aa).

The signal sequence occupies residues 1 to 22 (MSSSCSGLSRVLVAVATALVSA). At 24–370 (SPCPQAWGPP…DSVEQVAVLA (347 aa)) the chain is on the extracellular side. Positions 27–110 (PQAWGPPGVQ…LGGTVTLQLG (84 aa)) constitute an Ig-like C2-type domain. 3 disulfide bridges follow: Cys-48-Cys-94, Cys-120-Cys-130, and Cys-170-Cys-180. Fibronectin type-III domains lie at 112–219 (PPAR…LRPD) and 220–317 (PPQG…TPST). Asn-127 carries an N-linked (GlcNAc...) asparagine glycan. Residue Asn-194 is glycosylated (N-linked (GlcNAc...) asparagine). The short motif at 304–308 (WSTWS) is the WSXWS motif element. Residues 335 to 355 (EVEPQVDSPAPPRPSLQPHPR) are disordered. The chain crosses the membrane as a helical span at residues 371–391 (SLGILSFLGLVAGALALGLWL). Topologically, residues 392 to 422 (RLRRGGKDGSPKPGFLASVIPVDRRPGAPNL) are cytoplasmic. A disordered region spans residues 398–422 (KDGSPKPGFLASVIPVDRRPGAPNL). Basic and acidic residues predominate over residues 413-422 (VDRRPGAPNL).

It belongs to the type I cytokine receptor family. Type 3 subfamily. In terms of assembly, on IL11 binding, forms a multimer complex with IL6ST/gp130. A short soluble form is also released from the membrane by proteolysis. The sIL11RA is formed either by limited proteolysis of membrane-bound receptors, a process referred to as ectodomain shedding, or directly secreted from the cells after alternative mRNA splicing. mIL11RA is cleaved by the proteases ADAM10, ELANE and PRTN3. Expressed in a number of cell lines, including the myelogenous leukemia cell line K-562, the megakaryocytic leukemia cell line M-07e, the erythroleukemia cell line TF-1, and the osteosarcoma cell lines, MG-63 and SaOS-2. Also expressed in normal and malignant prostate epithelial cell lines. Expression levels are increased in prostate carcinoma.

It localises to the membrane. The protein resides in the secreted. Functionally, receptor for interleukin-11 (IL11). The receptor systems for IL6, LIF, OSM, CNTF, IL11 and CT1 can utilize IL6ST for initiating signal transmission. The IL11/IL11RA/IL6ST complex may be involved in the control of proliferation and/or differentiation of skeletogenic progenitor or other mesenchymal cells. Essential for the normal development of craniofacial bones and teeth. Restricts suture fusion and tooth number. In terms of biological role, soluble form of IL11 receptor (sIL11RA) that acts as an agonist of IL11 activity. The IL11:sIL11RA complex binds to IL6ST/gp130 on cell surfaces and induces signaling also on cells that do not express membrane-bound IL11RA in a process called IL11 trans-signaling. This chain is Interleukin-11 receptor subunit alpha, found in Homo sapiens (Human).